The sequence spans 719 residues: Calpain-12 (719 aa).

One can recognise a Calpain catalytic domain in the interval 45-341; the sequence is LFRDPYFPAG…FDTVQICSLS (297 aa). Residues Cys-105, His-259, and Asn-283 contribute to the active site. The interval 342-540 is domain III; sequence PEVLGPSPEG…DDVISADLQS (199 aa). Residues 393–402 are compositionally biased toward acidic residues; that stretch reads DEEDDEDEEG. The disordered stretch occupies residues 393–418; that stretch reads DEEDDEDEEGPWGGWGAAGARGPARG. The interval 541–719 is domain IV; the sequence is LQGPYLPLEL…RQWMEVATFS (179 aa). The 36-residue stretch at 620 to 655 folds into the EF-hand domain; sequence GYLLEWQAIFNKFDEDTSGTMNSYELRLALNAAGFH. Positions 633, 635, 637, 639, and 644 each coordinate Ca(2+).

It belongs to the peptidase C2 family.

Functionally, calcium-regulated non-lysosomal thiol-protease. In Homo sapiens (Human), this protein is Calpain-12 (CAPN12).